Reading from the N-terminus, the 164-residue chain is UBA-like domain-containing protein 2 (164 aa).

Serine 2 bears the N-acetylserine mark. Residues 144–164 (PPGASQGGAPQKAMAAMDGQR) form a disordered region.

The protein belongs to the UBALD family.

The polypeptide is UBA-like domain-containing protein 2 (Ubald2) (Mus musculus (Mouse)).